Consider the following 450-residue polypeptide: Tubulin alpha-3E chain (450 aa).

Residues 1–4 (MREC) carry the MREC motif motif. Position 11 (Q11) interacts with GTP. K40 carries the N6-acetyllysine modification. The GTP site is built by E71, S140, G144, T145, T179, N206, and N228. E71 provides a ligand contact to Mg(2+). E254 is a catalytic residue. A 3'-nitrotyrosine modification is found at Y282. A Phosphoserine modification is found at S439. Residue Y450 is modified to 3'-nitrotyrosine.

The protein belongs to the tubulin family. In terms of assembly, dimer of alpha and beta chains. A typical microtubule is a hollow water-filled tube with an outer diameter of 25 nm and an inner diameter of 15 nM. Alpha-beta heterodimers associate head-to-tail to form protofilaments running lengthwise along the microtubule wall with the beta-tubulin subunit facing the microtubule plus end conferring a structural polarity. Microtubules usually have 13 protofilaments but different protofilament numbers can be found in some organisms and specialized cells. It depends on Mg(2+) as a cofactor. In terms of processing, some glutamate residues at the C-terminus are polyglutamylated, resulting in polyglutamate chains on the gamma-carboxyl group. Polyglutamylation plays a key role in microtubule severing by spastin (SPAST). SPAST preferentially recognizes and acts on microtubules decorated with short polyglutamate tails: severing activity by SPAST increases as the number of glutamates per tubulin rises from one to eight, but decreases beyond this glutamylation threshold. Glutamylation is also involved in cilia motility. Post-translationally, some glutamate residues at the C-terminus are monoglycylated but not polyglycylated due to the absence of functional TTLL10 in human. Monoglycylation is mainly limited to tubulin incorporated into cilia and flagella axonemes, which is required for their stability and maintenance. Flagella glycylation controls sperm motility. Both polyglutamylation and monoglycylation can coexist on the same protein on adjacent residues, and lowering glycylation levels increases polyglutamylation, and reciprocally. Acetylation of alpha chains at Lys-40 is located inside the microtubule lumen. This modification has been correlated with increased microtubule stability, intracellular transport and ciliary assembly. In terms of processing, methylation of alpha chains at Lys-40 is found in mitotic microtubules and is required for normal mitosis and cytokinesis contributing to genomic stability. Post-translationally, nitration of Tyr-450 is irreversible and interferes with normal dynein intracellular distribution. Undergoes a tyrosination/detyrosination cycle, the cyclic removal and re-addition of a C-terminal tyrosine residue by the enzymes tubulin tyrosine carboxypeptidase (MATCAP1/KIAA0895L, VASH1 or VASH2) and tubulin tyrosine ligase (TTL), respectively. In terms of processing, tyrosination promotes microtubule interaction with CAP-Gly domain-containing proteins such as CLIP1, CLIP2 and DCTN1. Tyrosination regulates the initiation of dynein-dynactin motility via interaction with DCTN1, which brings the dynein-dynactin complex into contact with microtubules. In neurons, tyrosinated tubulins mediate the initiation of retrograde vesicle transport. Post-translationally, detyrosination is involved in metaphase plate congression by guiding chromosomes during mitosis: detyrosination promotes interaction with CENPE, promoting pole-proximal transport of chromosomes toward the equator. Detyrosination increases microtubules-dependent mechanotransduction in dystrophic cardiac and skeletal muscle. In cardiomyocytes, detyrosinated microtubules are required to resist to contractile compression during contraction: detyrosination promotes association with desmin (DES) at force-generating sarcomeres, leading to buckled microtubules and mechanical resistance to contraction.

Its subcellular location is the cytoplasm. It localises to the cytoskeleton. It carries out the reaction GTP + H2O = GDP + phosphate + H(+). Its function is as follows. Tubulin is the major constituent of microtubules, a cylinder consisting of laterally associated linear protofilaments composed of alpha- and beta-tubulin heterodimers. Microtubules grow by the addition of GTP-tubulin dimers to the microtubule end, where a stabilizing cap forms. Below the cap, tubulin dimers are in GDP-bound state, owing to GTPase activity of alpha-tubulin. The chain is Tubulin alpha-3E chain (TUBA3E) from Homo sapiens (Human).